We begin with the raw amino-acid sequence, 601 residues long: DDB1- and CUL4-associated factor 8 (601 aa).

2 stretches are compositionally biased toward polar residues: residues 1-24 (MSFSGEMSNGKTDVTNGGFSSSPE) and 46-60 (VSLSLTADETGTTQA). The tract at residues 1 to 150 (MSFSGEMSNG…DWLISEKTPL (150 aa)) is disordered. Positions 39 to 50 (IEVEASDVSLSL) match the Nuclear export signal motif. Basic and acidic residues predominate over residues 61–99 (ESRDSCSETSGEDKDSDSMDDTGHYSINDENRGNDQSHS). A coiled-coil region spans residues 94-131 (NDQSHSEDEEEEEEEDEEEEAVRHRKRAQRKRANRDQE). Residues 100 to 113 (EDEEEEEEEDEEEE) show a composition bias toward acidic residues. Residues 116–126 (RHRKRAQRKRA) show a composition bias toward basic residues. Residues 127-140 (NRDQESSDEERALD) are compositionally biased toward basic and acidic residues. 7 WD repeats span residues 194–233 (GHSGCVNTLHFNQRGTCLASGSDDLKVVVWDWVRRKPVLE), 237–278 (GHKS…CCKN), 284–324 (QHKG…PASR), 332–372 (ESKV…ENVN), 388–427 (EAKANITCLVYSHDGSELLASYNDEDIYLFNSSHSDGAEY), 435–475 (RNNA…IVQF), and 479–519 (DKGG…TELD). Residues 561-601 (RRRRRDAGLGAGDAESDDSPSSSDSSDDDEDGPDRVQCIPS) are disordered.

Belongs to the WD repeat DCAF8 family.

The protein resides in the nucleus. It localises to the cytoplasm. The sequence is that of DDB1- and CUL4-associated factor 8 (dcaf8) from Xenopus laevis (African clawed frog).